A 218-amino-acid chain; its full sequence is Pyridoxine/pyridoxamine 5'-phosphate oxidase (218 aa).

FMN-binding positions include 66–71 (RVVLLK), R87, K88, and Q110. K71 provides a ligand contact to substrate. Residues Y128, R132, and S136 each coordinate substrate. FMN-binding positions include 145 to 146 (QS) and W190. 196 to 198 (RLH) lines the substrate pocket. R200 is an FMN binding site.

Belongs to the pyridoxamine 5'-phosphate oxidase family. As to quaternary structure, homodimer. The cofactor is FMN.

The enzyme catalyses pyridoxamine 5'-phosphate + O2 + H2O = pyridoxal 5'-phosphate + H2O2 + NH4(+). It catalyses the reaction pyridoxine 5'-phosphate + O2 = pyridoxal 5'-phosphate + H2O2. Its pathway is cofactor metabolism; pyridoxal 5'-phosphate salvage; pyridoxal 5'-phosphate from pyridoxamine 5'-phosphate: step 1/1. It participates in cofactor metabolism; pyridoxal 5'-phosphate salvage; pyridoxal 5'-phosphate from pyridoxine 5'-phosphate: step 1/1. Functionally, catalyzes the oxidation of either pyridoxine 5'-phosphate (PNP) or pyridoxamine 5'-phosphate (PMP) into pyridoxal 5'-phosphate (PLP). The protein is Pyridoxine/pyridoxamine 5'-phosphate oxidase of Anaplasma marginale (strain St. Maries).